A 361-amino-acid chain; its full sequence is Chorismate synthase (361 aa).

NADP(+) contacts are provided by R48 and R54. FMN contacts are provided by residues 125 to 127, 238 to 239, G278, 293 to 297, and R319; these read RSS, NA, and KPTSS.

The protein belongs to the chorismate synthase family. Homotetramer. Requires FMNH2 as cofactor.

The enzyme catalyses 5-O-(1-carboxyvinyl)-3-phosphoshikimate = chorismate + phosphate. It functions in the pathway metabolic intermediate biosynthesis; chorismate biosynthesis; chorismate from D-erythrose 4-phosphate and phosphoenolpyruvate: step 7/7. In terms of biological role, catalyzes the anti-1,4-elimination of the C-3 phosphate and the C-6 proR hydrogen from 5-enolpyruvylshikimate-3-phosphate (EPSP) to yield chorismate, which is the branch point compound that serves as the starting substrate for the three terminal pathways of aromatic amino acid biosynthesis. This reaction introduces a second double bond into the aromatic ring system. This is Chorismate synthase from Photorhabdus laumondii subsp. laumondii (strain DSM 15139 / CIP 105565 / TT01) (Photorhabdus luminescens subsp. laumondii).